A 146-amino-acid polypeptide reads, in one-letter code: UPF0742 protein SPAC977.02 (146 aa).

A helical transmembrane segment spans residues 38–60 (LTVKYCLAVKLLIYLLYCWYIYS).

Belongs to the UPF0742 family.

The protein resides in the cytoplasm. It localises to the nucleus membrane. The chain is UPF0742 protein SPAC977.02 from Schizosaccharomyces pombe (strain 972 / ATCC 24843) (Fission yeast).